Here is a 446-residue protein sequence, read N- to C-terminus: Argininosuccinate synthase (446 aa).

Residues 17-25 and Ala43 contribute to the ATP site; that span reads AFSGGLDTS. Tyr99 contributes to the L-citrulline binding site. Residues Gly129 and Thr131 each coordinate ATP. Residues Thr131, Asn135, and Asp136 each coordinate L-aspartate. Asn135 contacts L-citrulline. Asp136 contacts ATP. The L-citrulline site is built by Arg139 and Ser192. Position 194 (Asp194) interacts with ATP. Positions 201, 203, and 280 each coordinate L-citrulline.

Belongs to the argininosuccinate synthase family. Type 2 subfamily. Homotetramer.

Its subcellular location is the cytoplasm. It catalyses the reaction L-citrulline + L-aspartate + ATP = 2-(N(omega)-L-arginino)succinate + AMP + diphosphate + H(+). It participates in amino-acid biosynthesis; L-arginine biosynthesis; L-arginine from L-ornithine and carbamoyl phosphate: step 2/3. The sequence is that of Argininosuccinate synthase from Polaromonas sp. (strain JS666 / ATCC BAA-500).